The following is a 326-amino-acid chain: Polycomb complex protein BMI-1-A (326 aa).

The RING-type zinc finger occupies 18-57 (CVLCGGYFIDATTIIECLHSFCKTCIVRYLETSKYCPICD). The Nuclear localization signal signature appears at 81-95 (KLVPGLFKGEMKRRR). 2 disordered regions span residues 239–262 (NPHT…DKAG) and 274–326 (CIPS…ISSG). The segment covering 290 to 303 (ISSTINGTSSSSSS) has biased composition (low complexity).

Component of a PRC1-like complex. Interacts with cbx4.

The protein resides in the nucleus. Component of a Polycomb group (PcG) multiprotein PRC1-like complex, a complex class required to maintain the transcriptionally repressive state of many genes, including Hox genes, throughout development. PcG PRC1 complex acts via chromatin remodeling and modification of histones; it mediates monoubiquitination of histone H2A 'Lys-119', rendering chromatin heritably changed in its expressibility. In the PRC1 complex, it is required to stimulate the E3 ubiquitin-protein ligase activity of rnf2. This chain is Polycomb complex protein BMI-1-A (bmi1a), found in Xenopus laevis (African clawed frog).